Here is a 165-residue protein sequence, read N- to C-terminus: Transcription antitermination protein NusB (165 aa).

Belongs to the NusB family.

Functionally, involved in transcription antitermination. Required for transcription of ribosomal RNA (rRNA) genes. Binds specifically to the boxA antiterminator sequence of the ribosomal RNA (rrn) operons. This Nitratidesulfovibrio vulgaris (strain DSM 19637 / Miyazaki F) (Desulfovibrio vulgaris) protein is Transcription antitermination protein NusB.